The sequence spans 840 residues: Cancer-associated gene 1 protein homolog (840 aa).

Residues M303–Y559 adopt a coiled-coil conformation. Residues E800–D840 form a disordered region. Positions P806–S815 are enriched in basic residues.

This is Cancer-associated gene 1 protein homolog (CAGE1) from Macaca fascicularis (Crab-eating macaque).